The sequence spans 1390 residues: DNA-directed RNA polymerase subunit beta'' (1390 aa).

Residues C224, C294, C301, and C304 each coordinate Zn(2+).

The protein belongs to the RNA polymerase beta' chain family. RpoC2 subfamily. As to quaternary structure, in plastids the minimal PEP RNA polymerase catalytic core is composed of four subunits: alpha, beta, beta', and beta''. When a (nuclear-encoded) sigma factor is associated with the core the holoenzyme is formed, which can initiate transcription. It depends on Zn(2+) as a cofactor.

Its subcellular location is the plastid. It is found in the chloroplast. It carries out the reaction RNA(n) + a ribonucleoside 5'-triphosphate = RNA(n+1) + diphosphate. DNA-dependent RNA polymerase catalyzes the transcription of DNA into RNA using the four ribonucleoside triphosphates as substrates. The protein is DNA-directed RNA polymerase subunit beta'' of Ceratophyllum demersum (Rigid hornwort).